A 294-amino-acid chain; its full sequence is 4-hydroxy-tetrahydrodipicolinate synthase (294 aa).

T44 is a pyruvate binding site. The active-site Proton donor/acceptor is Y132. The Schiff-base intermediate with substrate role is filled by K161. I206 serves as a coordination point for pyruvate.

Belongs to the DapA family. In terms of assembly, homotetramer; dimer of dimers.

Its subcellular location is the cytoplasm. It carries out the reaction L-aspartate 4-semialdehyde + pyruvate = (2S,4S)-4-hydroxy-2,3,4,5-tetrahydrodipicolinate + H2O + H(+). It functions in the pathway amino-acid biosynthesis; L-lysine biosynthesis via DAP pathway; (S)-tetrahydrodipicolinate from L-aspartate: step 3/4. Catalyzes the condensation of (S)-aspartate-beta-semialdehyde [(S)-ASA] and pyruvate to 4-hydroxy-tetrahydrodipicolinate (HTPA). In Thermotoga neapolitana (strain ATCC 49049 / DSM 4359 / NBRC 107923 / NS-E), this protein is 4-hydroxy-tetrahydrodipicolinate synthase.